The chain runs to 123 residues: Immunoglobulin lambda variable 5-39 (123 aa).

A signal peptide spans 1–19 (MAWTPLLLLLLSHCTGSLS). Residues 20-44 (QPVLTQPTSLSASPGASARFTCTLR) are framework-1. The Ig-like domain occupies 21-123 (PVLTQPTSLS…YCAIWYSSTS (103 aa)). A disulfide bond links C41 and C115. A complementarity-determining-1 region spans residues 45-53 (SGINVGTYR). A framework-2 region spans residues 54 to 70 (IYWYQQKPGSLPRYLLR). The tract at residues 71-77 (YKSDSDK) is complementarity-determining-2. The segment at 78–115 (QQGSGVPSRFSGSKDASTNAGLLLISGLQSEDEADYYC) is framework-3. The complementarity-determining-3 stretch occupies residues 116–123 (AIWYSSTS).

In terms of assembly, immunoglobulins are composed of two identical heavy chains and two identical light chains; disulfide-linked.

It is found in the secreted. The protein resides in the cell membrane. V region of the variable domain of immunoglobulin light chains that participates in the antigen recognition. Immunoglobulins, also known as antibodies, are membrane-bound or secreted glycoproteins produced by B lymphocytes. In the recognition phase of humoral immunity, the membrane-bound immunoglobulins serve as receptors which, upon binding of a specific antigen, trigger the clonal expansion and differentiation of B lymphocytes into immunoglobulins-secreting plasma cells. Secreted immunoglobulins mediate the effector phase of humoral immunity, which results in the elimination of bound antigens. The antigen binding site is formed by the variable domain of one heavy chain, together with that of its associated light chain. Thus, each immunoglobulin has two antigen binding sites with remarkable affinity for a particular antigen. The variable domains are assembled by a process called V-(D)-J rearrangement and can then be subjected to somatic hypermutations which, after exposure to antigen and selection, allow affinity maturation for a particular antigen. This Homo sapiens (Human) protein is Immunoglobulin lambda variable 5-39.